Consider the following 113-residue polypeptide: Large ribosomal subunit protein uL22 (113 aa).

It belongs to the universal ribosomal protein uL22 family. Part of the 50S ribosomal subunit.

Its function is as follows. This protein binds specifically to 23S rRNA; its binding is stimulated by other ribosomal proteins, e.g. L4, L17, and L20. It is important during the early stages of 50S assembly. It makes multiple contacts with different domains of the 23S rRNA in the assembled 50S subunit and ribosome. Functionally, the globular domain of the protein is located near the polypeptide exit tunnel on the outside of the subunit, while an extended beta-hairpin is found that lines the wall of the exit tunnel in the center of the 70S ribosome. This chain is Large ribosomal subunit protein uL22, found in Natranaerobius thermophilus (strain ATCC BAA-1301 / DSM 18059 / JW/NM-WN-LF).